A 315-amino-acid chain; its full sequence is WD repeat domain-containing protein 83 (315 aa).

7 WD repeats span residues 23–62 (CGQG…LLRT), 65–104 (GHGY…VVRK), 107–146 (GHAG…PEPV), 151–188 (EARD…LFSD), 190–228 (VGSP…LLGE), 231–272 (GHKN…LALA), and 275–313 (VGSG…AEDG).

Belongs to the WD repeat MORG1 family. Interacts with EGLN3/PHD3. Interacts with ERK signaling proteins MAP2K1/MEK1, MAP2K2/MEK2, LAMTOR3, ARAF/Raf-1, MAPK1/ERK2 and MAPK3/ERK1. Identified in the spliceosome C complex. Interacts with PARD6B and CRB3. Interacts strongly with GTP-bound RRAGA but not with inactive GDP-bound. Interacts with p62/SQSTM1.

It is found in the cytoplasm. It localises to the lysosome. Its subcellular location is the nucleus. Molecular scaffold protein for various multimeric protein complexes. Acts as a module in the assembly of a multicomponent scaffold for the ERK pathway, linking ERK responses to specific agonists. At low concentrations it enhances ERK activation, whereas high concentrations lead to the inhibition of ERK activation. Also involved in response to hypoxia by acting as a negative regulator of HIF1A/HIF-1-alpha via its interaction with EGLN3/PHD3. May promote degradation of HIF1A. May act by recruiting signaling complexes to a specific upstream activator. May also be involved in pre-mRNA splicing. Participates in tight junction development by regulating apico-basal polarity, a key step in tissue development and organization. Mechanistically, regulates the translocation of PAR6-aPKC from the cytoplasm to the apical surface by acting as an adapter between PARD6B AND CRB3. Also acts as a negative regulator of mTORC1 under nutrient-rich conditions by binding to the active Rag GTPases to inhibit mTORC1 localization to the lysosome and phosphorylation of downstream targets. This facilitates constitutive basal autophagy during nutrient availability. The polypeptide is WD repeat domain-containing protein 83 (WDR83) (Homo sapiens (Human)).